Here is an 805-residue protein sequence, read N- to C-terminus: Leucine--tRNA ligase (805 aa).

Residues 39 to 50 (PYPSGKGLHVGH) carry the 'HIGH' region motif. Positions 583–587 (KMSKS) match the 'KMSKS' region motif. Position 586 (Lys586) interacts with ATP.

The protein belongs to the class-I aminoacyl-tRNA synthetase family.

The protein resides in the cytoplasm. It carries out the reaction tRNA(Leu) + L-leucine + ATP = L-leucyl-tRNA(Leu) + AMP + diphosphate. This Mycoplasmoides gallisepticum (strain R(low / passage 15 / clone 2)) (Mycoplasma gallisepticum) protein is Leucine--tRNA ligase.